Consider the following 91-residue polypeptide: Small integral membrane protein 12-A (91 aa).

A helical membrane pass occupies residues 12–34 (YAPYITFPVAFVVGAVGYQLEWF).

This sequence belongs to the SMIM12 family.

Its subcellular location is the membrane. This is Small integral membrane protein 12-A (smim12-a) from Xenopus laevis (African clawed frog).